Reading from the N-terminus, the 303-residue chain is Methionine import ATP-binding protein MetN (303 aa).

An ABC transporter domain is found at Met1–Gly222. Gly19–Ser26 is a binding site for ATP.

It belongs to the ABC transporter superfamily. Methionine importer (TC 3.A.1.24) family. The complex is composed of two ATP-binding proteins (MetN), two transmembrane proteins (MetI) and a solute-binding protein (MetQ).

The protein resides in the cell inner membrane. The catalysed reaction is L-methionine(out) + ATP + H2O = L-methionine(in) + ADP + phosphate + H(+). The enzyme catalyses D-methionine(out) + ATP + H2O = D-methionine(in) + ADP + phosphate + H(+). In terms of biological role, part of the ABC transporter complex MetNIQ involved in methionine import. Responsible for energy coupling to the transport system. The protein is Methionine import ATP-binding protein MetN of Wolinella succinogenes (strain ATCC 29543 / DSM 1740 / CCUG 13145 / JCM 31913 / LMG 7466 / NCTC 11488 / FDC 602W) (Vibrio succinogenes).